A 261-amino-acid chain; its full sequence is Probable RNA-binding protein ARP1 (261 aa).

An RRM domain is found at Thr17–Leu94. The disordered stretch occupies residues Gly96 to Val122. Over residues Pro102–Arg116 the composition is skewed to polar residues.

Expressed in vasculature of leaves, roots and siliques.

The protein resides in the nucleus. Functionally, probable RNA-binding protein involved in the regulation of abscisic acid (ABA) response during seed germination. May regulate transcript levels of several germination-responsive genes under ABA. This is Probable RNA-binding protein ARP1 from Arabidopsis thaliana (Mouse-ear cress).